A 354-amino-acid chain; its full sequence is Trans-L-3-hydroxyproline dehydratase (354 aa).

Cys104 (proton acceptor) is an active-site residue. Substrate contacts are provided by residues 105 to 106 (GH), Asp269, and 274 to 275 (GS).

Belongs to the proline racemase family. Homodimer.

It carries out the reaction trans-3-hydroxy-L-proline = 1-pyrroline-2-carboxylate + H2O. Catalyzes the dehydration of trans-3-hydroxy-L-proline to Delta(1)-pyrroline-2-carboxylate (Pyr2C). This is Trans-L-3-hydroxyproline dehydratase (L3HYPDH) from Bos taurus (Bovine).